The sequence spans 154 residues: MKITLLTVGKLGRMVEAQLAVDYASRATASGRALAVGPVEIVEVEARKPGKAAEAEVLRPHLEGAYVIACDEHGKVRPSRAFAEHVGRLRDDGHRRLVFLIGGADGLDPSILSTANETLAFGPQTWPHALARAMLAEQVYRAVTILAGSPYHRD.

Glycine 102 is a binding site for S-adenosyl-L-methionine.

It belongs to the RNA methyltransferase RlmH family. In terms of assembly, homodimer.

It localises to the cytoplasm. The catalysed reaction is pseudouridine(1915) in 23S rRNA + S-adenosyl-L-methionine = N(3)-methylpseudouridine(1915) in 23S rRNA + S-adenosyl-L-homocysteine + H(+). In terms of biological role, specifically methylates the pseudouridine at position 1915 (m3Psi1915) in 23S rRNA. In Caulobacter sp. (strain K31), this protein is Ribosomal RNA large subunit methyltransferase H.